A 332-amino-acid chain; its full sequence is UPF0194 membrane protein YbhG (332 aa).

An N-terminal signal peptide occupies residues 1–16; it reads MMKKPVVIGLAVVVLA. The stretch at 108–209 forms a coiled coil; it reads EEIAQAAAAV…LNLQDSTLIA (102 aa).

Belongs to the UPF0194 family.

The protein localises to the periplasm. The sequence is that of UPF0194 membrane protein YbhG from Escherichia coli (strain 55989 / EAEC).